Reading from the N-terminus, the 319-residue chain is Cell division protein FtsN (319 aa).

The interval 1 to 30 is disordered; that stretch reads MAQRDYVRRSQPAPSRRKKSTSRKKQRNLP. Residues 1–33 lie on the Cytoplasmic side of the membrane; sequence MAQRDYVRRSQPAPSRRKKSTSRKKQRNLPAVS. Residues 4-6 form a mediates interaction with FtsA region; sequence RDY. Basic residues predominate over residues 15–27; the sequence is SRRKKSTSRKKQR. Residues 34–54 form a helical membrane-spanning segment; sequence PAMVAIAAAVLVTFIGGLYFI. At 55–319 the chain is on the periplasmic side; sequence THHKKEESET…TNCIRLAAGG (265 aa). 2 disordered regions span residues 60–79 and 89–113; these read EESE…PPKP and LESR…TPEQ. 4 consecutive repeat copies span residues 115–120, 145–150, 197–200, and 220–223. The tract at residues 115 to 150 is 2 X 6 AA repeats; that stretch reads TPEQRQLLEQMQADMRQQPTQLVEVPWNEQTPEQRQ. Positions 140–245 are disordered; it reads PWNEQTPEQR…PKPTAEKKDE (106 aa). Positions 143 to 171 are enriched in low complexity; that stretch reads EQTPEQRQQTLQRQRQAQQLAEQQRLAQQ. Residues 172-221 are compositionally biased toward polar residues; sequence SRTTEQSWQQQTRTSQAAPVQAQPRQSKPASSQQPYQDLLQTPAHTTAQS. Residues 197–223 form a 2 X 4 AA repeats region; that stretch reads QSKPASSQQPYQDLLQTPAHTTAQSKP. The segment covering 222–238 has biased composition (low complexity); the sequence is KPQQAAPVARAADAPKP. The region spanning 242-316 is the SPOR domain; the sequence is KKDERRWMVQ…AGHTNCIRLA (75 aa). Cys252 and Cys312 are joined by a disulfide.

This sequence belongs to the FtsN family. As to quaternary structure, interacts with FtsA via its N-terminal cytoplasmic domain. Interacts with ZapA, FtsQ, FtsW and FtsI.

Its subcellular location is the cell inner membrane. In terms of biological role, essential cell division protein that activates septal peptidoglycan synthesis and constriction of the cell. Acts on both sides of the membrane, via interaction with FtsA in the cytoplasm and interaction with the FtsQBL complex in the periplasm. These interactions may induce a conformational switch in both FtsA and FtsQBL, leading to septal peptidoglycan synthesis by FtsI and associated synthases. Required for full FtsI activity. Required for recruitment of AmiC to the septal ring. The chain is Cell division protein FtsN from Escherichia coli (strain K12).